The following is a 687-amino-acid chain: MEELVGLREGSSGKPVTLQELWGPCPRIRRGVRRGLEWLKERLFRVGEDWHFLVALGVLMALISYAMNFAIGRVVRAHKWLYREVGDGHLLRYLSWTVYPVALLSFSSGFSQSISPFSGGSGLPELKTMLSGVVLEDYLDIKNFGAKVVGLSCTLATGSTIFLGKVGPFVHLSVMISAYLGRVRAKTIGETENKAKEIEMLSAAAAVGVATVFAAPFSGVLFSIEVMSSHFSVWNYWRGFFAATCGAFMFRLLGVFNSEQETITSIYKTRFRVDVPFDLPEIFFFVALGFICGVLSCAYLFCQRTFLRFIKTNRYTSRLLATSKPSYAALVALVLASITYPPGVGRFMASRLSMAEHLHSLFDNNSWALMTRNSSPPWPAEPDPQNLWLEWCHPRFTIFGTLAFFLVMKFWMLILATTIPMPAGYFMPIFIIGAAIGRLLGEALSVAFPEGIVAGREVNPIMPGGYALAGAAAFSGAVTHTISTALLAFELTGQIVHALPVLMAVLAANAISQNCQPSFYDGTIMAKKLPYLPWIRGRQIGSYPVTVEHFMNCNLTTLAKDTPLEEVVKVVTSTEVSQYPLVETRESQTLVGIVERTHLVQALQTQPASWAPGQERFLQDILAGGCPTQPVTLQLSPETSLYQAHSLFERLTLQSLFVTSRGKAVGSVSWAELKKAISTLINPPAPK.

The next 5 membrane-spanning stretches (helical) occupy residues 52–72 (FLVALGVLMALISYAMNFAIG), 94–114 (LSWTVYPVALLSFSSGFSQSI), 161–181 (IFLGKVGPFVHLSVMISAYLG), 204–224 (AAAVGVATVFAAPFSGVLFSI), and 236–256 (YWRGFFAATCGAFMFRLLGVF). Ca(2+)-binding residues include Glu259, Glu261, Asp278, and Glu281. 6 consecutive transmembrane segments (helical) span residues 282–302 (IFFFVALGFICGVLSCAYLFC), 325–345 (PSYAALVALVLASITYPPGVG), 396–416 (FTIFGTLAFFLVMKFWMLILA), 417–437 (TTIPMPAGYFMPIFIIGAAIG), 458–478 (VNPIMPGGYALAGAAAFSGAV), and 486–506 (LLAFELTGQIVHALPVLMAVL). The Cytoplasmic portion of the chain corresponds to 507–687 (AANAISQNCQ…STLINPPAPK (181 aa)). 2 consecutive CBS domains span residues 551-609 (MNCN…QPAS) and 626-687 (CPTQ…PAPK).

The protein belongs to the chloride channel (TC 2.A.49) family. CLCNKA subfamily. Homodimer. Interacts with BSND. In terms of tissue distribution, expressed predominantly in the kidney. Expressed strongly in the cortical thick ascending limb and the distal convoluted tubule, with minor expression in the S3 segment of the proximal tubule and the cortical collecting tubule.

The protein resides in the basolateral cell membrane. The enzyme catalyses chloride(in) = chloride(out). It catalyses the reaction bromide(in) = bromide(out). The catalysed reaction is nitrate(in) = nitrate(out). It carries out the reaction iodide(out) = iodide(in). With respect to regulation, activated by extracellular Ca(2+) and inhibited by extracellular acidic pH. Anion-selective channel permeable to small monovalent anions with ion selectivity for chloride &gt; bromide &gt; nitrate &gt; iodide. Forms a homodimeric channel where each subunit has its own ion conduction pathway. Conducts double-barreled currents controlled by two types of gates, two fast gates that control each subunit independently and a slow common gate that opens and shuts off both subunits simultaneously. Assembles with the regulatory subunit BSND/Barttin for sorting at the basolateral plasma membrane domain. CLCNKA:BSND channels are activated upon membrane hyperpolarization mostly controlled by fast gating. Mediates transepithelial chloride transport from the lumen to interstitial compartment along the thin ascending limb of Henle's loop, contributing to generation of hypertonic medullary interstitium as a countercurrent system to achieve urine concentration. Conducts chloride currents in the stria vascularis of the inner ear to establish the endocochlear potential necessary for normal hearing. The chain is Chloride channel protein ClC-Ka from Rattus norvegicus (Rat).